The sequence spans 357 residues: LINE-1 retrotransposable element ORF1 protein (357 aa).

The segment at 1-40 (MAKGKRKNPTNRNQDHSPSSERSTPTPPSPGHPNTTENLD) is disordered. A coiled-coil region spans residues 59 to 156 (HKSLKDLQES…IENIDTTVKE (98 aa)). Residues 179 to 274 (NLRIIGIDEN…KGRPIRITPD (96 aa)) form an RNA recognition motif (RRM) domain region. The interval 278–339 (ETMKARRAWT…STNPALQRII (62 aa)) is C-terminal domain (CTD).

This sequence belongs to the transposase 22 family. In terms of assembly, homotrimer (via coiled coil domain). May also form larger homooligomers. Interacts with Tex19.1 and UBR2. Interacts with MOV10. In terms of processing, polyubiquitinated, probably by UBR2, which induces its degradation. Expressed in meiotic spermatocytes and in the cerebellum (at protein level).

It localises to the nucleus. Its subcellular location is the nucleolus. The protein resides in the cytoplasm. The protein localises to the cytoplasmic ribonucleoprotein granule. It is found in the stress granule. In terms of biological role, nucleic acid-binding protein which is essential for retrotransposition of LINE-1 elements in the genome. Functions as a nucleic acid chaperone binding its own transcript and therefore preferentially mobilizing the transcript from which they are encoded. This Mus musculus (Mouse) protein is LINE-1 retrotransposable element ORF1 protein.